The following is a 116-amino-acid chain: uncharacterized protein (116 aa).

A helical membrane pass occupies residues 5 to 23; sequence LLAVETWYMLILSFRFLFF.

The protein resides in the membrane. This is an uncharacterized protein from Saccharomyces cerevisiae (strain ATCC 204508 / S288c) (Baker's yeast).